Reading from the N-terminus, the 1387-residue chain is DNA-directed RNA polymerase subunit beta (1387 aa).

This sequence belongs to the RNA polymerase beta chain family. The RNAP catalytic core consists of 2 alpha, 1 beta, 1 beta' and 1 omega subunit. When a sigma factor is associated with the core the holoenzyme is formed, which can initiate transcription.

It carries out the reaction RNA(n) + a ribonucleoside 5'-triphosphate = RNA(n+1) + diphosphate. In terms of biological role, DNA-dependent RNA polymerase catalyzes the transcription of DNA into RNA using the four ribonucleoside triphosphates as substrates. The chain is DNA-directed RNA polymerase subunit beta from Xanthomonas campestris pv. campestris (strain ATCC 33913 / DSM 3586 / NCPPB 528 / LMG 568 / P 25).